Here is a 1014-residue protein sequence, read N- to C-terminus: Collagen alpha-1(I) chain (1014 aa).

The tract at residues 1 to 1014 (SYGYDEKGGI…PGPPGPPGPP (1014 aa)) is disordered. Positions 9–22 (GISVPGPMGPSGPR) are enriched in low complexity. Residues Pro25, Pro28, Pro30, Pro39, Pro42, Pro45, Pro60, Pro75, Pro81, Pro90, and Pro96 each carry the 4-hydroxyproline modification. Over residues 33-51 (QGFQGPPGEPGEPGSSGPM) the composition is skewed to low complexity. Residues 63 to 77 (NGDDGEAGKPGRPGE) show a composition bias toward basic and acidic residues. At Lys99 the chain carries 5-hydroxylysine; alternate. Lys99 carries O-linked (Gal...) hydroxylysine; alternate glycosylation. Position 105 is a phosphoserine (Ser105). Low complexity predominate over residues 113–129 (DAGPAGPKGEPGSPGEN). Pro123, Pro126, Pro132, Pro141, Pro147, Pro168, Pro177, Pro180, Pro207, Pro210, Pro222, Pro228, Pro237, Pro243, Pro246, and Pro261 each carry 4-hydroxyproline. Low complexity predominate over residues 147–165 (PGASGPAGARGNDGATGAA). Residues 167–179 (PPGPTGPAGPPGF) are compositionally biased toward pro residues. Low complexity predominate over residues 213-252 (AGAAGPAGNPGADGQPGAKGANGAPGIAGAPGFPGARGPS). Lys264 carries the 5-hydroxylysine modification. 4-hydroxyproline is present on residues Pro270, Pro273, Pro285, Pro294, Pro309, Pro315, Pro324, and Pro330. The span at 319 to 328 (GERGGPGSRG) shows a compositional bias: gly residues. 5-hydroxylysine is present on Lys339. 26 positions are modified to 4-hydroxyproline: Pro348, Pro357, Pro363, Pro369, Pro378, Pro381, Pro390, Pro399, Pro405, Pro417, Pro426, Pro435, Pro438, Pro456, Pro473, Pro479, Pro485, Pro491, Pro497, Pro503, Pro515, Pro524, Pro535, Pro548, Pro554, and Pro563. The span at 372–398 (KGLTGSPGSPGPDGKTGPPGPAGQDGR) shows a compositional bias: low complexity. Residues 407–426 (ARGQAGVMGFPGPKGAAGEP) are compositionally biased toward low complexity. The span at 485-494 (PGEAGKPGEQ) shows a compositional bias: low complexity. The residue at position 575 (Lys575) is a 5-hydroxylysine. Pro581, Pro596, and Pro602 each carry 4-hydroxyproline. The span at 608–622 (SGPSGPAGPTGARGA) shows a compositional bias: low complexity. At Ser611 the chain carries Phosphoserine. A 4-hydroxyproline mark is found at Pro623, Pro629, Pro632, Pro641, Pro647, Pro674, and Pro683. Over residues 635 to 665 (AGFAGPPGADGQPGAKGEPGDAGAKGDAGPS) the composition is skewed to low complexity. Lys686 bears the 5-hydroxylysine mark. Low complexity predominate over residues 691–707 (SAGPPGATGFPGAAGRV). Residues Pro695 and Pro701 each carry the 4-hydroxyproline modification. Pro709 is subject to 3-hydroxyproline. 4-hydroxyproline occurs at positions 710, 719, 722, 743, 752, 760, 769, 787, 796, 799, 805, 820, 826, 832, 841, and 847. Positions 736–745 (ETGPAGRPGE) are enriched in low complexity. The span at 757–769 (KGSPGADGPAGAP) shows a compositional bias: low complexity. Over residues 819 to 829 (PPGPVGPPGLA) the composition is skewed to pro residues. 5-hydroxylysine is present on Lys856. A compositionally biased stretch (pro residues) spans 864-879 (PGPPGAPGAPGAPGPV). Residues Pro867, Pro870, and Pro873 each carry the 4-hydroxyproline modification. Residues 900–914 (AGPAGARGPAGPQGP) show a composition bias toward low complexity. The segment covering 915-929 (RGDKGETGEQGDRGI) has biased composition (basic and acidic residues). Lys918 carries the 5-hydroxylysine modification. Position 930 is a 5-hydroxylysine; alternate (Lys930). A glycan (O-linked (Gal...) hydroxylysine; alternate) is linked at Lys930. 4 positions are modified to 4-hydroxyproline: Pro945, Pro948, Pro966, and Pro981. Residues 948–981 (PGEQGPSGASGPAGPRGPPGSAGSPGKDGLNGLP) are compositionally biased toward low complexity. Pro986 is subject to 3-hydroxyproline. Pro987 carries the 4-hydroxyproline modification. Positions 999–1014 (VGPPGPPGPPGPPGPP) are enriched in pro residues. At Pro1001 the chain carries 3-hydroxyproline. A 4-hydroxyproline modification is found at Pro1002. Position 1004 is a 3-hydroxyproline (Pro1004). At Pro1005 the chain carries 4-hydroxyproline. At Pro1007 the chain carries 3-hydroxyproline. A 4-hydroxyproline mark is found at Pro1008, Pro1011, and Pro1014.

It belongs to the fibrillar collagen family. Trimers of one alpha 2(I) and two alpha 1(I) chains. In terms of processing, contains mostly 4-hydroxyproline. Proline residues at the third position of the tripeptide repeating unit (G-X-Y) are hydroxylated in some or all of the chains. Post-translationally, contains 3-hydroxyproline at a few sites. This modification occurs on the first proline residue in the sequence motif Gly-Pro-Hyp, where Hyp is 4-hydroxyproline. Lysine residues at the third position of the tripeptide repeating unit (G-X-Y) are 5-hydroxylated in some or all of the chains. In terms of processing, O-glycosylated on hydroxylated lysine residues. The O-linked glycan consists of a Glc-Gal disaccharide. As to expression, expressed in bones.

The protein localises to the secreted. Its subcellular location is the extracellular space. It is found in the extracellular matrix. Its function is as follows. Type I collagen is a member of group I collagen (fibrillar forming collagen). The sequence is that of Collagen alpha-1(I) chain from Megatherium americanum (Giant ground sloth).